The primary structure comprises 428 residues: Enolase (428 aa).

Glutamine 163 is a binding site for (2R)-2-phosphoglycerate. The active-site Proton donor is the glutamate 205. Residues aspartate 242, glutamate 285, and aspartate 312 each coordinate Mg(2+). Residues lysine 337, arginine 366, serine 367, and lysine 388 each coordinate (2R)-2-phosphoglycerate. Lysine 337 (proton acceptor) is an active-site residue.

The protein belongs to the enolase family. The cofactor is Mg(2+).

The protein resides in the cytoplasm. It is found in the secreted. The protein localises to the cell surface. The enzyme catalyses (2R)-2-phosphoglycerate = phosphoenolpyruvate + H2O. The protein operates within carbohydrate degradation; glycolysis; pyruvate from D-glyceraldehyde 3-phosphate: step 4/5. Catalyzes the reversible conversion of 2-phosphoglycerate (2-PG) into phosphoenolpyruvate (PEP). It is essential for the degradation of carbohydrates via glycolysis. The polypeptide is Enolase (Moorella thermoacetica (strain ATCC 39073 / JCM 9320)).